The sequence spans 600 residues: tRNA uridine 5-carboxymethylaminomethyl modification enzyme MnmG (600 aa).

10–15 contacts FAD; it reads GGGHAG. Positions 216–239 are disordered; the sequence is ADPQPRGFTGTPGPRAAESPTWQT. 267–281 lines the NAD(+) pocket; sequence GPRYCPSIEDKVVKF.

It belongs to the MnmG family. As to quaternary structure, homodimer. Heterotetramer of two MnmE and two MnmG subunits. The cofactor is FAD.

The protein localises to the cytoplasm. Functionally, NAD-binding protein involved in the addition of a carboxymethylaminomethyl (cmnm) group at the wobble position (U34) of certain tRNAs, forming tRNA-cmnm(5)s(2)U34. The chain is tRNA uridine 5-carboxymethylaminomethyl modification enzyme MnmG from Deinococcus radiodurans (strain ATCC 13939 / DSM 20539 / JCM 16871 / CCUG 27074 / LMG 4051 / NBRC 15346 / NCIMB 9279 / VKM B-1422 / R1).